Consider the following 198-residue polypeptide: Nucleoside triphosphate pyrophosphatase (198 aa).

Asp-74 functions as the Proton acceptor in the catalytic mechanism.

The protein belongs to the Maf family. A divalent metal cation serves as cofactor.

It is found in the cytoplasm. It catalyses the reaction a ribonucleoside 5'-triphosphate + H2O = a ribonucleoside 5'-phosphate + diphosphate + H(+). It carries out the reaction a 2'-deoxyribonucleoside 5'-triphosphate + H2O = a 2'-deoxyribonucleoside 5'-phosphate + diphosphate + H(+). In terms of biological role, nucleoside triphosphate pyrophosphatase. May have a dual role in cell division arrest and in preventing the incorporation of modified nucleotides into cellular nucleic acids. The polypeptide is Nucleoside triphosphate pyrophosphatase (Sphingopyxis alaskensis (strain DSM 13593 / LMG 18877 / RB2256) (Sphingomonas alaskensis)).